The chain runs to 254 residues: Pimeloyl-[acyl-carrier protein] methyl ester esterase (254 aa).

The 226-residue stretch at 16-241 (LVLLHGWGMN…QSSHAPFMTE (226 aa)) folds into the AB hydrolase-1 domain. Residues W22, 82–83 (SL), and 143–147 (FMALQ) contribute to the substrate site. Residue S82 is the Nucleophile of the active site. Residues D207 and H235 contribute to the active site. Residue H235 coordinates substrate.

It belongs to the AB hydrolase superfamily. Carboxylesterase BioH family. In terms of assembly, monomer.

It is found in the cytoplasm. The catalysed reaction is 6-carboxyhexanoyl-[ACP] methyl ester + H2O = 6-carboxyhexanoyl-[ACP] + methanol + H(+). It functions in the pathway cofactor biosynthesis; biotin biosynthesis. Its function is as follows. The physiological role of BioH is to remove the methyl group introduced by BioC when the pimeloyl moiety is complete. It allows to synthesize pimeloyl-ACP via the fatty acid synthetic pathway through the hydrolysis of the ester bonds of pimeloyl-ACP esters. The polypeptide is Pimeloyl-[acyl-carrier protein] methyl ester esterase (Vibrio campbellii (strain ATCC BAA-1116)).